Here is a 397-residue protein sequence, read N- to C-terminus: S-adenosylmethionine synthase (397 aa).

Residue His16 coordinates ATP. Asp18 provides a ligand contact to Mg(2+). Residue Glu44 coordinates K(+). Residues Glu57 and Gln100 each contribute to the L-methionine site. The flexible loop stretch occupies residues 100–110; the sequence is QSPDIAQGVDN. Residues 175–177, 242–243, Asp251, 257–258, Ala274, and Lys278 contribute to the ATP site; these read DGK, RF, and RK. L-methionine is bound at residue Asp251. Lys282 serves as a coordination point for L-methionine.

This sequence belongs to the AdoMet synthase family. As to quaternary structure, homotetramer; dimer of dimers. Requires Mg(2+) as cofactor. K(+) is required as a cofactor.

The protein localises to the cytoplasm. It catalyses the reaction L-methionine + ATP + H2O = S-adenosyl-L-methionine + phosphate + diphosphate. It functions in the pathway amino-acid biosynthesis; S-adenosyl-L-methionine biosynthesis; S-adenosyl-L-methionine from L-methionine: step 1/1. In terms of biological role, catalyzes the formation of S-adenosylmethionine (AdoMet) from methionine and ATP. The overall synthetic reaction is composed of two sequential steps, AdoMet formation and the subsequent tripolyphosphate hydrolysis which occurs prior to release of AdoMet from the enzyme. This is S-adenosylmethionine synthase from Leifsonia xyli subsp. xyli (strain CTCB07).